A 631-amino-acid polypeptide reads, in one-letter code: Mitochondrial Rho GTPase 1 (631 aa).

The Cytoplasmic segment spans residues 1-605; the sequence is MPAGRGRPLR…TQADLKSSTF (605 aa). One can recognise a Miro 1 domain in the interval 15 to 181; it reads KKDVRILLVG…FYYAQKAVLH (167 aa). Positions 27, 29, 30, 31, and 32 each coordinate GTP. Thr-31 contributes to the Mg(2+) binding site. 2 residues coordinate Mg(2+): Pro-48 and Asp-70. A GTP-binding site is contributed by Ser-72. Position 105 is an N6-acetyllysine (Lys-105). GTP contacts are provided by Asn-131, Lys-132, Asp-134, Ala-162, and Lys-163. Lys-166 is covalently cross-linked (Glycyl lysine isopeptide (Lys-Gly) (interchain with G-Cter in ubiquitin)). In terms of domain architecture, EF-hand 1 spans 197 to 232; sequence ACIKALTRIFKISDQDNDGTLNDAELNFFQRICFNT. Positions 210, 212, 214, 216, and 221 each coordinate Ca(2+). Lys-248 is covalently cross-linked (Glycyl lysine isopeptide (Lys-Gly) (interchain with G-Cter in ubiquitin)). The region spanning 317–352 is the EF-hand 2 domain; the sequence is HAYLFLQSTFDKHDLDRDCALSPDELKDLFKVFPYI. Asp-330, Asp-332, Asp-334, Ala-336, and Glu-341 together coordinate Ca(2+). Residues 429 to 592 form the Miro 2 domain; it reads RNVFRCNVIG…FVKLTTMAMY (164 aa). Residues Asn-441, Cys-442, Gly-443, Lys-444, Ser-445, Gly-446, Lys-460, Lys-541, Asp-543, Thr-571, and Cys-572 each contribute to the GTP site. Residue Asn-441 participates in Mg(2+) binding. Lys-585 participates in a covalent cross-link: Glycyl lysine isopeptide (Lys-Gly) (interchain with G-Cter in ubiquitin). Residues 606–628 form a helical; Anchor for type IV membrane protein membrane-spanning segment; that stretch reads WLRASFGATVFAVLGFAMYKALL. The Mitochondrial intermembrane segment spans residues 629 to 631; the sequence is KQR.

The protein belongs to the mitochondrial Rho GTPase family. As to quaternary structure, homodimer. Interacts with the kinesin-binding proteins TRAK1/OIP106 and TRAK2/GRIF1, forming a link between mitochondria and the trafficking apparatus of the microtubules. Interacts with RAP1GDS1. Interacts with ARMCX1. Found in a complex with KIF5B, OGT, RHOT2 and TRAK1. Ubiquitinated by PRKN during mitophagy, leading to its degradation and enhancement of mitophagy. Deubiquitinated by USP30. Post-translationally, acetylation on Lys-105 decreases sensitivity of mitochondrial transport to elevated Ca(2+) levels, increases mitochondrial transport and promotes axon growth. Deacetylated by HDAC6 which blocks mitochondrial transport and mediates axon growth inhibition.

Its subcellular location is the mitochondrion outer membrane. The enzyme catalyses GTP + H2O = GDP + phosphate + H(+). It catalyses the reaction ATP + H2O = ADP + phosphate + H(+). It carries out the reaction UTP + H2O = UDP + phosphate + H(+). Its function is as follows. Atypical mitochondrial nucleoside-triphosphatase (NTPase) involved in mitochondrial trafficking. Probably involved in control of anterograde transport of mitochondria and their subcellular distribution. Promotes mitochondrial fission during high calcium conditions. Can hydrolyze GTP, ATP and UTP. The chain is Mitochondrial Rho GTPase 1 (RHOT1) from Bos taurus (Bovine).